The chain runs to 428 residues: Adenylosuccinate synthetase (428 aa).

Residues G12–K18 and G40–T42 each bind GTP. The active-site Proton acceptor is the D13. Mg(2+) is bound by residues D13 and G40. IMP contacts are provided by residues D13 to K16, N38 to H41, T128, R142, Q222, T237, and R301. H41 (proton donor) is an active-site residue. V297–R303 contributes to the substrate binding site. Residues R303, K329–D331, and S411–S413 contribute to the GTP site.

The protein belongs to the adenylosuccinate synthetase family. As to quaternary structure, homodimer. Requires Mg(2+) as cofactor.

It localises to the cytoplasm. It carries out the reaction IMP + L-aspartate + GTP = N(6)-(1,2-dicarboxyethyl)-AMP + GDP + phosphate + 2 H(+). Its pathway is purine metabolism; AMP biosynthesis via de novo pathway; AMP from IMP: step 1/2. Its function is as follows. Plays an important role in the de novo pathway of purine nucleotide biosynthesis. Catalyzes the first committed step in the biosynthesis of AMP from IMP. In Caulobacter sp. (strain K31), this protein is Adenylosuccinate synthetase.